Reading from the N-terminus, the 101-residue chain is NAD(P)H-quinone oxidoreductase subunit 4L, chloroplastic (101 aa).

3 helical membrane-spanning segments follow: residues 2-22 (MLEH…YGLI), 32-52 (MCLE…SDFF), and 61-81 (ILSI…LAIV).

This sequence belongs to the complex I subunit 4L family. As to quaternary structure, NDH is composed of at least 16 different subunits, 5 of which are encoded in the nucleus.

It is found in the plastid. The protein resides in the chloroplast thylakoid membrane. The enzyme catalyses a plastoquinone + NADH + (n+1) H(+)(in) = a plastoquinol + NAD(+) + n H(+)(out). It carries out the reaction a plastoquinone + NADPH + (n+1) H(+)(in) = a plastoquinol + NADP(+) + n H(+)(out). Functionally, NDH shuttles electrons from NAD(P)H:plastoquinone, via FMN and iron-sulfur (Fe-S) centers, to quinones in the photosynthetic chain and possibly in a chloroplast respiratory chain. The immediate electron acceptor for the enzyme in this species is believed to be plastoquinone. Couples the redox reaction to proton translocation, and thus conserves the redox energy in a proton gradient. This chain is NAD(P)H-quinone oxidoreductase subunit 4L, chloroplastic, found in Buxus microphylla (Littleleaf boxwood).